The sequence spans 370 residues: Spermidine/putrescine import ATP-binding protein PotA (370 aa).

The region spanning 11 to 241 (IELRSITKSY…PKNLFVAKFI (231 aa)) is the ABC transporter domain. 43–50 (GPSGCGKT) contacts ATP.

Belongs to the ABC transporter superfamily. Spermidine/putrescine importer (TC 3.A.1.11.1) family. In terms of assembly, the complex is composed of two ATP-binding proteins (PotA), two transmembrane proteins (PotB and PotC) and a solute-binding protein (PotD).

The protein resides in the cell inner membrane. It catalyses the reaction ATP + H2O + polyamine-[polyamine-binding protein]Side 1 = ADP + phosphate + polyamineSide 2 + [polyamine-binding protein]Side 1.. Part of the ABC transporter complex PotABCD involved in spermidine/putrescine import. Responsible for energy coupling to the transport system. This is Spermidine/putrescine import ATP-binding protein PotA from Pasteurella multocida (strain Pm70).